The sequence spans 328 residues: D-cysteine desulfhydrase (328 aa).

Position 51 is an N6-(pyridoxal phosphate)lysine (Lys51).

It belongs to the ACC deaminase/D-cysteine desulfhydrase family. As to quaternary structure, homodimer. The cofactor is pyridoxal 5'-phosphate.

The catalysed reaction is D-cysteine + H2O = hydrogen sulfide + pyruvate + NH4(+) + H(+). Functionally, catalyzes the alpha,beta-elimination reaction of D-cysteine and of several D-cysteine derivatives. It could be a defense mechanism against D-cysteine. This chain is D-cysteine desulfhydrase, found in Salmonella typhi.